Consider the following 689-residue polypeptide: Glycine--tRNA ligase beta subunit (689 aa).

This sequence belongs to the class-II aminoacyl-tRNA synthetase family. In terms of assembly, tetramer of two alpha and two beta subunits.

It is found in the cytoplasm. It carries out the reaction tRNA(Gly) + glycine + ATP = glycyl-tRNA(Gly) + AMP + diphosphate. This Klebsiella pneumoniae subsp. pneumoniae (strain ATCC 700721 / MGH 78578) protein is Glycine--tRNA ligase beta subunit.